Here is a 211-residue protein sequence, read N- to C-terminus: LexA repressor (211 aa).

The H-T-H motif DNA-binding region spans 31–51 (RAEISKELGFRSPNAAEEHLK). Active-site for autocatalytic cleavage activity residues include S127 and K164.

It belongs to the peptidase S24 family. As to quaternary structure, homodimer.

It carries out the reaction Hydrolysis of Ala-|-Gly bond in repressor LexA.. Functionally, represses a number of genes involved in the response to DNA damage (SOS response), including recA and lexA. In the presence of single-stranded DNA, RecA interacts with LexA causing an autocatalytic cleavage which disrupts the DNA-binding part of LexA, leading to derepression of the SOS regulon and eventually DNA repair. In Pasteurella multocida (strain Pm70), this protein is LexA repressor.